The following is a 31-amino-acid chain: Cyclotide vico-A (31 aa).

The cyclopeptide (Gly-Asn) cross-link spans 1–31; sequence GSIPCAESCVYIPCFTGIAGCSCKNKVCYYN. 3 disulfide bridges follow: Cys-5-Cys-21, Cys-9-Cys-23, and Cys-14-Cys-28.

Belongs to the cyclotide family. Bracelet subfamily. This is a cyclic peptide.

In terms of biological role, probably participates in a plant defense mechanism. The protein is Cyclotide vico-A of Viola cotyledon (Violeta).